Consider the following 493-residue polypeptide: Glutamyl-tRNA(Gln) amidotransferase subunit A (493 aa).

Active-site charge relay system residues include Lys-81 and Ser-156. Residue Ser-180 is the Acyl-ester intermediate of the active site.

The protein belongs to the amidase family. GatA subfamily. Heterotrimer of A, B and C subunits.

It carries out the reaction L-glutamyl-tRNA(Gln) + L-glutamine + ATP + H2O = L-glutaminyl-tRNA(Gln) + L-glutamate + ADP + phosphate + H(+). Functionally, allows the formation of correctly charged Gln-tRNA(Gln) through the transamidation of misacylated Glu-tRNA(Gln) in organisms which lack glutaminyl-tRNA synthetase. The reaction takes place in the presence of glutamine and ATP through an activated gamma-phospho-Glu-tRNA(Gln). The polypeptide is Glutamyl-tRNA(Gln) amidotransferase subunit A (Mycolicibacterium paratuberculosis (strain ATCC BAA-968 / K-10) (Mycobacterium paratuberculosis)).